Consider the following 510-residue polypeptide: Probable cytosol aminopeptidase (510 aa).

Mn(2+)-binding residues include Lys-268 and Asp-273. Lys-280 is an active-site residue. Positions 291, 350, and 352 each coordinate Mn(2+). Arg-354 is a catalytic residue.

Belongs to the peptidase M17 family. It depends on Mn(2+) as a cofactor.

The protein resides in the cytoplasm. The catalysed reaction is Release of an N-terminal amino acid, Xaa-|-Yaa-, in which Xaa is preferably Leu, but may be other amino acids including Pro although not Arg or Lys, and Yaa may be Pro. Amino acid amides and methyl esters are also readily hydrolyzed, but rates on arylamides are exceedingly low.. It carries out the reaction Release of an N-terminal amino acid, preferentially leucine, but not glutamic or aspartic acids.. In terms of biological role, presumably involved in the processing and regular turnover of intracellular proteins. Catalyzes the removal of unsubstituted N-terminal amino acids from various peptides. The chain is Probable cytosol aminopeptidase from Micrococcus luteus (strain ATCC 4698 / DSM 20030 / JCM 1464 / CCM 169 / CCUG 5858 / IAM 1056 / NBRC 3333 / NCIMB 9278 / NCTC 2665 / VKM Ac-2230) (Micrococcus lysodeikticus).